The primary structure comprises 373 residues: Galactoside alpha-(1,2)-fucosyltransferase 1 (373 aa).

Residues 1–12 (MWPPSRRQLCLA) lie on the Cytoplasmic side of the membrane. The helical; Signal-anchor for type II membrane protein transmembrane segment at 13-29 (FLLVCALSAFSFLLHLH) threads the bilayer. Topologically, residues 30–373 (QDLFRNGLAL…GSWRPWRFLG (344 aa)) are lumenal. Residues N66, N301, and N327 are each glycosylated (N-linked (GlcNAc...) asparagine).

It belongs to the glycosyltransferase 11 family. In terms of tissue distribution, brain.

It is found in the golgi apparatus. Its subcellular location is the golgi stack membrane. It carries out the reaction a beta-D-galactosyl-(1-&gt;4)-N-acetyl-beta-D-glucosaminyl derivative + GDP-beta-L-fucose = an alpha-L-Fuc-(1-&gt;2)-beta-D-Gal-(1-&gt;4)-beta-D-GlcNAc derivative + GDP + H(+). The enzyme catalyses a ganglioside GA1 + GDP-beta-L-fucose = a ganglioside Fuc-GA1 + GDP + H(+). It catalyses the reaction a beta-D-Gal-(1-&gt;3)-beta-D-GlcNAc-(1-&gt;3)-beta-D-Gal-(1-&gt;4)-beta-D-Glc-(1&lt;-&gt;1')-Cer(d18:1(4E)) + GDP-beta-L-fucose = alpha-L-fucosyl-(1-&gt;2)- beta-D-galactosyl-(1-&gt;3)-N-acetyl-beta-D-glucosaminyl-(1-&gt;3)-beta-D-galactosyl-(1-&gt;4)-beta-D-glucosyl-(1&lt;-&gt;1')-N-acylsphing-4-enine + GDP + H(+). The catalysed reaction is a neolactoside nLc4Cer(d18:1(4E)) + GDP-beta-L-fucose = a neolactoside IV(2)-alpha-Fuc-nLc4Cer(d18:1(4E)) + GDP + H(+). It carries out the reaction a ganglioside GM1 + GDP-beta-L-fucose = a ganglioside Fuc-GM1 + GDP + H(+). The enzyme catalyses beta-D-galactosyl-(1-&gt;3)-N-acetyl-D-galactosamine + GDP-beta-L-fucose = alpha-L-fucosyl-(1-&gt;2)-beta-D-galactosyl-(1-&gt;3)-N-acetyl-D-galactosamine + GDP + H(+). The protein operates within protein modification; protein glycosylation. Its function is as follows. Catalyzes the transfer of L-fucose, from a guanosine diphosphate-beta-L-fucose, to the terminal galactose residue of glycoconjugates through an alpha(1,2) linkage leading to H antigen synthesis that is an intermediate substrate in the synthesis of ABO blood group antigens. H antigen is essential for maturation of the glomerular layer of the main olfactory bulb, in cell migration and early cell-cell contacts during tumor associated angiogenesis. Preferentially fucosylates soluble lactose and to a lesser extent fucosylates glycolipids gangliosides GA1 and GM1a. The sequence is that of Galactoside alpha-(1,2)-fucosyltransferase 1 from Oryctolagus cuniculus (Rabbit).